Consider the following 208-residue polypeptide: MASKCPKCDKTVYFAEKVSSLGKDWHKFCLKCERCNKTLTPGGHAEHDGKPFCHKPCYATLFGPKGVNIGGAGSYIYEKPPTEAPQVTGPIEVPVVRTEERKTSGPPKGPSKASSVTTFTGEPNMCPRCNKRVYFAEKVTSLGKDWHRPCLRCERCSKTLTPGGHAEHDGQPYCHKPCYGILFGPKGVNTGAVGSYIYDKDPEGTVQP.

The LIM zinc-binding 1 domain occupies 5 to 57 (CPKCDKTVYFAEKVSSLGKDWHKFCLKCERCNKTLTPGGHAEHDGKPFCHKPC). Residue Lys23 is modified to N6-acetyllysine. Residue Ser104 is modified to Phosphoserine. In terms of domain architecture, LIM zinc-binding 2 spans 126 to 178 (CPRCNKRVYFAEKVTSLGKDWHRPCLRCERCSKTLTPGGHAEHDGQPYCHKPC). Residues Lys138 and Lys144 each carry the N6-acetyllysine modification.

As to quaternary structure, interacts with TGFB1I1. In terms of tissue distribution, expressed more abundantly in liver and kidney of females than that of males. Equally expressed in brain, lung and heart.

The chain is Cysteine-rich protein 2 (Crip2) from Rattus norvegicus (Rat).